Here is a 304-residue protein sequence, read N- to C-terminus: ATP phosphoribosyltransferase (304 aa).

The protein belongs to the ATP phosphoribosyltransferase family. Long subfamily. The cofactor is Mg(2+).

The protein localises to the cytoplasm. It carries out the reaction 1-(5-phospho-beta-D-ribosyl)-ATP + diphosphate = 5-phospho-alpha-D-ribose 1-diphosphate + ATP. It participates in amino-acid biosynthesis; L-histidine biosynthesis; L-histidine from 5-phospho-alpha-D-ribose 1-diphosphate: step 1/9. Feedback inhibited by histidine. Its function is as follows. Catalyzes the condensation of ATP and 5-phosphoribose 1-diphosphate to form N'-(5'-phosphoribosyl)-ATP (PR-ATP). Has a crucial role in the pathway because the rate of histidine biosynthesis seems to be controlled primarily by regulation of HisG enzymatic activity. The polypeptide is ATP phosphoribosyltransferase (Xanthomonas euvesicatoria pv. vesicatoria (strain 85-10) (Xanthomonas campestris pv. vesicatoria)).